The sequence spans 250 residues: ATP synthase subunit a (250 aa).

6 helical membrane passes run 26–46 (FTNA…FLYL), 84–104 (FFPM…LGMV), 114–134 (IIVT…YGFY), 143–163 (LFVP…IEII), 193–213 (FVAS…LPLI), and 216–236 (VALT…FAVL).

It belongs to the ATPase A chain family. F-type ATPases have 2 components, CF(1) - the catalytic core - and CF(0) - the membrane proton channel. CF(1) has five subunits: alpha(3), beta(3), gamma(1), delta(1), epsilon(1). CF(0) has three main subunits: a(1), b(2) and c(9-12). The alpha and beta chains form an alternating ring which encloses part of the gamma chain. CF(1) is attached to CF(0) by a central stalk formed by the gamma and epsilon chains, while a peripheral stalk is formed by the delta and b chains.

It localises to the cell inner membrane. Key component of the proton channel; it plays a direct role in the translocation of protons across the membrane. This Rhizobium meliloti (strain 1021) (Ensifer meliloti) protein is ATP synthase subunit a.